Here is a 119-residue protein sequence, read N- to C-terminus: Flagellar transcriptional regulator FlhD (119 aa).

Belongs to the FlhD family. As to quaternary structure, homodimer; disulfide-linked. Forms a heterohexamer composed of two FlhC and four FlhD subunits. Each FlhC binds a FlhD dimer, forming a heterotrimer, and a hexamer assembles by dimerization of two heterotrimers.

The protein resides in the cytoplasm. In terms of biological role, functions in complex with FlhC as a master transcriptional regulator that regulates transcription of several flagellar and non-flagellar operons by binding to their promoter region. Activates expression of class 2 flagellar genes, including fliA, which is a flagellum-specific sigma factor that turns on the class 3 genes. Also regulates genes whose products function in a variety of physiological pathways. In Cronobacter sakazakii (strain ATCC BAA-894) (Enterobacter sakazakii), this protein is Flagellar transcriptional regulator FlhD.